Consider the following 207-residue polypeptide: Ribosomal RNA large subunit methyltransferase E (207 aa).

S-adenosyl-L-methionine-binding residues include Gly60, Trp62, Asp80, Asp96, and Asp121. Lys161 acts as the Proton acceptor in catalysis.

This sequence belongs to the class I-like SAM-binding methyltransferase superfamily. RNA methyltransferase RlmE family.

It localises to the cytoplasm. It carries out the reaction uridine(2552) in 23S rRNA + S-adenosyl-L-methionine = 2'-O-methyluridine(2552) in 23S rRNA + S-adenosyl-L-homocysteine + H(+). Functionally, specifically methylates the uridine in position 2552 of 23S rRNA at the 2'-O position of the ribose in the fully assembled 50S ribosomal subunit. This Marinobacter nauticus (strain ATCC 700491 / DSM 11845 / VT8) (Marinobacter aquaeolei) protein is Ribosomal RNA large subunit methyltransferase E.